A 778-amino-acid chain; its full sequence is Protection of telomeres protein 1 (778 aa).

It belongs to the telombin family. Homodimer or homooligomer. Component of the telomerase ribonucleoprotein complex. Binds single-stranded telomeric DNA as a monomer. Found in a complex with TERF1, TINF2 and TNKS1. Interacts with TNKS1.

Its subcellular location is the nucleus. The protein resides in the chromosome. It is found in the telomere. Functionally, component of the telomerase ribonucleoprotein (RNP) complex that is essential for the replication of chromosome termini. Is a component of the double-stranded telomeric DNA-binding TRF1 complex that is involved in the regulation of telomere length by cis-inhibition of telomerase. Also acts as a single-stranded telomeric DNA-binding protein and thus may act as a downstream effector of the TRF1 complex and may transduce information about telomere maintenance and/or length to the telomere terminus. Binds to at least two telomeric single-stranded 5'-TTAGGG-3' repeats (G-strand). Its activity is TERT dependent but it does not increase TERT activity. The chain is Protection of telomeres protein 1 (POT1) from Gallus gallus (Chicken).